The following is a 475-amino-acid chain: C3a anaphylatoxin chemotactic receptor (475 aa).

Over 1–23 (MESSSAETNSTGLHLEPQYQPET) the chain is Extracellular. N-linked (GlcNAc...) asparagine glycosylation occurs at Asn9. A helical transmembrane segment spans residues 24-46 (ILAMAILGLTFVLGLPGNGLVLW). The Cytoplasmic segment spans residues 47 to 57 (VAGLKMRRTVN). The chain crosses the membrane as a helical span at residues 58-80 (TVWFLHLTVADFVCCLSLPFSMA). Topologically, residues 81–96 (HLALRGYWPYGEILCK) are extracellular. The cysteines at positions 95 and 172 are disulfide-linked. The chain crosses the membrane as a helical span at residues 97–118 (FIPTVIIFNMFASVFLLTAISL). Over 119–139 (DRCLMVLKPIWCQNHRNVRTA) the chain is Cytoplasmic. The helical transmembrane segment at 140 to 160 (CIICGCIWLVAFVLCIPVFVY) threads the bilayer. The Extracellular portion of the chain corresponds to 161–331 (RETFTLENHT…RLLKVITFTR (171 aa)). N-linked (GlcNAc...) asparagine glycosylation is present at Asn168. Tyr174 and Tyr183 each carry sulfotyrosine. Residues Asn273 and Asn292 are each glycosylated (N-linked (GlcNAc...) asparagine). A helical membrane pass occupies residues 332-351 (LVVGFLLPMIIMVACYTLII). Over 352-368 (FRMRRVRVVKSWNKALH) the chain is Cytoplasmic. The helical transmembrane segment at 369–391 (LAMVVVTIFLICWAPYHVFGVLI) threads the bilayer. At 392 to 408 (LFINPESRVGAALLSWD) the chain is on the extracellular side. Residues 409–429 (HVSIALASANSCFNPFLYALL) traverse the membrane as a helical segment. Over 430-475 (GRDLRKRVRQSMKGILEAAFSEDISKSTSFIQAKAFSEKHSLSTNV) the chain is Cytoplasmic. Ser450 is modified (phosphoserine).

Belongs to the G-protein coupled receptor 1 family. In terms of assembly, interacts with VGF-derived peptide TLQP-21. Expressed in the heart, kidney, lung, liver, peritoneal macrophages and spleen.

Its subcellular location is the cell membrane. Functionally, receptor for the chemotactic and inflammatory peptide anaphylatoxin C3a. This receptor stimulates chemotaxis, granule enzyme release and superoxide anion production. This is C3a anaphylatoxin chemotactic receptor (C3AR1) from Cavia porcellus (Guinea pig).